A 252-amino-acid polypeptide reads, in one-letter code: Probable transcriptional regulatory protein RF_0799 (252 aa).

Residues 1–21 (MAGHSKFKNIQHRKGAQDKKR) form a disordered region.

It belongs to the TACO1 family.

It is found in the cytoplasm. This is Probable transcriptional regulatory protein RF_0799 from Rickettsia felis (strain ATCC VR-1525 / URRWXCal2) (Rickettsia azadi).